A 951-amino-acid polypeptide reads, in one-letter code: Multiple C2 and transmembrane domain-containing protein 1 (951 aa).

Disordered stretches follow at residues 29-79, 92-117, 129-198, and 210-231; these read LGVG…RWSG, SSSQ…AEQG, LPVA…QKSS, and LEPA…ALQK. Positions 31-43 are enriched in gly residues; the sequence is VGKGKGGGGGRAG. The segment covering 147–168 has biased composition (low complexity); sequence PGGRSPDSAPSSSSASSSLSSS. Residues 174 to 184 show a composition bias toward basic and acidic residues; it reads RGDRVRDESTR. The span at 219–228 shows a compositional bias: low complexity; it reads PARGPAEPQA. 3 consecutive C2 domains span residues 240–358, 404–521, and 555–676; these read KIST…DVTL, QTQS…KLEL, and QKER…AYVL. The Ca(2+) site is built by Asp-275, Asp-281, Asp-328, Asp-330, Asp-336, Asp-438, Asp-444, Asp-491, Asp-493, Asp-499, Asp-594, Asp-600, Asp-646, Asp-648, and Asp-654. The next 2 membrane-spanning stretches (helical) occupy residues 763 to 783 and 866 to 886; these read FVLF…LLLL and PFLS…LYFI.

It belongs to the MCTP family. It depends on Ca(2+) as a cofactor.

The protein localises to the cytoplasmic vesicle. Its subcellular location is the secretory vesicle. It localises to the synaptic vesicle membrane. The protein resides in the recycling endosome. It is found in the endoplasmic reticulum membrane. In terms of biological role, calcium sensor which is essential for the stabilization of normal baseline neurotransmitter release and for the induction and long-term maintenance of presynaptic homeostatic plasticity. The sequence is that of Multiple C2 and transmembrane domain-containing protein 1 from Mus musculus (Mouse).